We begin with the raw amino-acid sequence, 545 residues long: Membrane protein insertase YidC (545 aa).

4 helical membrane-spanning segments follow: residues 350–370 (IIGN…AVLY), 424–444 (LPML…FASV), 461–481 (ADPY…QTYL), and 498–518 (PLVF…YWVV).

The protein belongs to the OXA1/ALB3/YidC family. Type 1 subfamily. In terms of assembly, interacts with the Sec translocase complex via SecD. Specifically interacts with transmembrane segments of nascent integral membrane proteins during membrane integration.

The protein resides in the cell inner membrane. Its function is as follows. Required for the insertion and/or proper folding and/or complex formation of integral membrane proteins into the membrane. Involved in integration of membrane proteins that insert both dependently and independently of the Sec translocase complex, as well as at least some lipoproteins. Aids folding of multispanning membrane proteins. This is Membrane protein insertase YidC from Neisseria gonorrhoeae (strain ATCC 700825 / FA 1090).